A 455-amino-acid chain; its full sequence is Serine--tRNA ligase (455 aa).

An L-serine-binding site is contributed by 252–254 (TAE). ATP is bound by residues 283-285 (RKE) and valine 299. Glutamate 306 is a binding site for L-serine. ATP is bound at residue 370 to 373 (EVVS). Threonine 406 lines the L-serine pocket.

Belongs to the class-II aminoacyl-tRNA synthetase family. Type-1 seryl-tRNA synthetase subfamily. Homodimer. The tRNA molecule binds across the dimer.

It is found in the cytoplasm. The catalysed reaction is tRNA(Ser) + L-serine + ATP = L-seryl-tRNA(Ser) + AMP + diphosphate + H(+). It carries out the reaction tRNA(Sec) + L-serine + ATP = L-seryl-tRNA(Sec) + AMP + diphosphate + H(+). It functions in the pathway aminoacyl-tRNA biosynthesis; selenocysteinyl-tRNA(Sec) biosynthesis; L-seryl-tRNA(Sec) from L-serine and tRNA(Sec): step 1/1. Functionally, catalyzes the attachment of serine to tRNA(Ser). Is also able to aminoacylate tRNA(Sec) with serine, to form the misacylated tRNA L-seryl-tRNA(Sec), which will be further converted into selenocysteinyl-tRNA(Sec). This is Serine--tRNA ligase from Thermococcus gammatolerans (strain DSM 15229 / JCM 11827 / EJ3).